Consider the following 480-residue polypeptide: Beta-glucosidase A (480 aa).

Catalysis depends on Glu177, which acts as the Proton donor. Glu378 acts as the Nucleophile in catalysis.

The protein belongs to the glycosyl hydrolase 1 family.

It catalyses the reaction Hydrolysis of terminal, non-reducing beta-D-glucosyl residues with release of beta-D-glucose.. This chain is Beta-glucosidase A (bglA), found in Enterobacter agglomerans (Erwinia herbicola).